We begin with the raw amino-acid sequence, 194 residues long: Protein PHLOEM PROTEIN 2-LIKE A2 (194 aa).

A helical transmembrane segment spans residues 49–71; it reads VTFVFFCFFKISLNSAYLYTLYS.

As to expression, vascular tissues, specifically in phloem companion cell-sieve element complexes.

Its subcellular location is the membrane. The sequence is that of Protein PHLOEM PROTEIN 2-LIKE A2 (PP2A2) from Arabidopsis thaliana (Mouse-ear cress).